Here is a 29-residue protein sequence, read N- to C-terminus: MDIISIGWVSLMVVFTFSISLVVWGRSGL.

The helical transmembrane segment at 3–23 threads the bilayer; it reads IISIGWVSLMVVFTFSISLVV.

The protein belongs to the PetN family. The 4 large subunits of the cytochrome b6-f complex are cytochrome b6, subunit IV (17 kDa polypeptide, PetD), cytochrome f and the Rieske protein, while the 4 small subunits are PetG, PetL, PetM and PetN. The complex functions as a dimer.

It localises to the plastid. Its subcellular location is the chloroplast thylakoid membrane. Functionally, component of the cytochrome b6-f complex, which mediates electron transfer between photosystem II (PSII) and photosystem I (PSI), cyclic electron flow around PSI, and state transitions. The sequence is that of Cytochrome b6-f complex subunit 8 from Staurastrum punctulatum (Green alga).